The sequence spans 327 residues: Phenylalanine--tRNA ligase alpha subunit (327 aa).

Residue Glu252 coordinates Mg(2+).

The protein belongs to the class-II aminoacyl-tRNA synthetase family. Phe-tRNA synthetase alpha subunit type 1 subfamily. As to quaternary structure, tetramer of two alpha and two beta subunits. The cofactor is Mg(2+).

The protein resides in the cytoplasm. It carries out the reaction tRNA(Phe) + L-phenylalanine + ATP = L-phenylalanyl-tRNA(Phe) + AMP + diphosphate + H(+). This chain is Phenylalanine--tRNA ligase alpha subunit, found in Erwinia tasmaniensis (strain DSM 17950 / CFBP 7177 / CIP 109463 / NCPPB 4357 / Et1/99).